A 311-amino-acid chain; its full sequence is Methionyl-tRNA formyltransferase (311 aa).

109-112 (SLLP) contacts (6S)-5,6,7,8-tetrahydrofolate.

This sequence belongs to the Fmt family.

The enzyme catalyses L-methionyl-tRNA(fMet) + (6R)-10-formyltetrahydrofolate = N-formyl-L-methionyl-tRNA(fMet) + (6S)-5,6,7,8-tetrahydrofolate + H(+). Functionally, attaches a formyl group to the free amino group of methionyl-tRNA(fMet). The formyl group appears to play a dual role in the initiator identity of N-formylmethionyl-tRNA by promoting its recognition by IF2 and preventing the misappropriation of this tRNA by the elongation apparatus. In Staphylococcus aureus (strain JH1), this protein is Methionyl-tRNA formyltransferase.